The primary structure comprises 327 residues: Thiamine thiazole synthase (327 aa).

Substrate-binding positions include Cys86, 107–108, Gly115, and Val182; that span reads EA. Cys216 is modified (2,3-didehydroalanine (Cys)). Substrate contacts are provided by residues Asp218, His233, Met285, and 295 to 297; that span reads RMG.

Belongs to the THI4 family. As to quaternary structure, homooctamer. It depends on Fe cation as a cofactor. In terms of processing, during the catalytic reaction, a sulfide is transferred from Cys-216 to a reaction intermediate, generating a dehydroalanine residue.

It localises to the cytoplasm. Its subcellular location is the nucleus. The enzyme catalyses [ADP-thiazole synthase]-L-cysteine + glycine + NAD(+) = [ADP-thiazole synthase]-dehydroalanine + ADP-5-ethyl-4-methylthiazole-2-carboxylate + nicotinamide + 3 H2O + 2 H(+). Involved in biosynthesis of the thiamine precursor thiazole. Catalyzes the conversion of NAD and glycine to adenosine diphosphate 5-(2-hydroxyethyl)-4-methylthiazole-2-carboxylic acid (ADT), an adenylated thiazole intermediate. The reaction includes an iron-dependent sulfide transfer from a conserved cysteine residue of the protein to a thiazole intermediate. The enzyme can only undergo a single turnover, which suggests it is a suicide enzyme. May have additional roles in adaptation to various stress conditions and in DNA damage tolerance. The protein is Thiamine thiazole synthase of Aspergillus oryzae (strain ATCC 42149 / RIB 40) (Yellow koji mold).